Reading from the N-terminus, the 296-residue chain is 33 kDa chaperonin (296 aa).

Disulfide bonds link cysteine 233–cysteine 235 and cysteine 267–cysteine 270.

This sequence belongs to the HSP33 family. In terms of processing, under oxidizing conditions two disulfide bonds are formed involving the reactive cysteines. Under reducing conditions zinc is bound to the reactive cysteines and the protein is inactive.

The protein resides in the cytoplasm. Redox regulated molecular chaperone. Protects both thermally unfolding and oxidatively damaged proteins from irreversible aggregation. Plays an important role in the bacterial defense system toward oxidative stress. This Actinobacillus pleuropneumoniae serotype 3 (strain JL03) protein is 33 kDa chaperonin.